The chain runs to 61 residues: LKCHNKLVPFLSKTCPDGKNLCYKMSMEVTPMIPIKRGCTDTCPKSSLLVKVVCCKTDKCN.

4 cysteine pairs are disulfide-bonded: Cys-3-Cys-22, Cys-15-Cys-39, Cys-43-Cys-54, and Cys-55-Cys-60.

This sequence belongs to the three-finger toxin family. Short-chain subfamily. Type IB cytotoxin sub-subfamily. In terms of tissue distribution, expressed by the venom gland.

The protein resides in the secreted. In terms of biological role, this protein lyses red blood cells and has cardiotoxic and hypotensive activities. The protein is Cytotoxin 3 of Hemachatus haemachatus (Rinkhals).